Reading from the N-terminus, the 221-residue chain is MKTCHSHDELIHIYLDGDATKEQKEELYAHLQSCPSCREHLQELKKSIAFIQSSSHIEAPEGFTAGVMAKLPKTKKTAKWKLKAKRHPILVAAAIFLIMMSAAFFSAWSHTTDGIAVSGNGPFVIDKEAGVVVVPEGEVIDGDLVVRNGTLVLEGEVRGNVLLINSRFNKDTLYASPNQVTGEIEEVDKALSWAWYNMKEFFNEVVAVFDAGEDDPHSTDN.

The Cytoplasmic portion of the chain corresponds to Met-1–His-87. Positions 30, 34, and 37 each coordinate Zn(2+). The chain crosses the membrane as a helical span at residues Pro-88–Trp-108. At Ser-109–Asn-221 the chain is on the extracellular side.

It belongs to the zinc-associated anti-sigma factor (ZAS) superfamily. Anti-sigma-W factor family. It depends on Zn(2+) as a cofactor. Is processed by three successive proteolytic events. First, the extracellular region of RsiW is cleaved by PrsW (Site-1 cleavage) in response to cell envelope stresses. Next, it undergoes cleavage at an intramembrane site (Site-2 cleavage) mediated by RasP. This cleavage uncovers a cryptic proteolytic tag with conserved alanine residues in the transmembrane segment, that is recognized mainly by the ClpXP protease, which completely degrades the protein in the cytoplasm and leads to the induction of the sigma-W-controlled genes.

Its subcellular location is the membrane. In terms of biological role, is the anti-sigma factor for SigW. The presence of RsiW leads to the inactivation of SigW, and its proteolytic destruction to sigma-W activation. This Shouchella clausii (strain KSM-K16) (Alkalihalobacillus clausii) protein is Anti-sigma-W factor RsiW (rsiW).